Here is a 393-residue protein sequence, read N- to C-terminus: MTRIGTPLSPTATRVLLCGCGELGKEVVIELQRLGVEVIAVDRYANAPAMQVAHRSHVVNMLDGVALRAVIEAEKPHYIVPEIEAIATATLVELENEGFNVVPTARATQLTMNREGIRRLAAEELDLPTSPYHFADTFEDYAKAVADVGYPCVVKPVMSSSGKGQSLLRSDADLQKSWDYAQEGGRAGKGRVIIEGFIDFDYEITLLTVRHVGGTTYLEPVGHRQEKGDYQESWQPQAMSPKALAESQRVAKAVTDALGGRGLFGVELFVKGDQVWFSEVSPRPHDTGLVTLISQDLSQFALHARAILGLPIPVVRQFGPSASAVILPEGQSQQTSFANLGAALSEPDTAIRLFGKPEINGQRRMGVCLARDESIEAARAKATRAAQAVKVEF.

Residues 22–23 (EL) and Glu-82 each bind N(1)-(5-phospho-beta-D-ribosyl)glycinamide. Residues Arg-114, Lys-155, 160–165 (SSGKGQ), 195–198 (EGFI), and Glu-203 each bind ATP. In terms of domain architecture, ATP-grasp spans 119–308 (RLAAEELDLP…QFALHARAIL (190 aa)). Glu-267 and Glu-279 together coordinate Mg(2+). N(1)-(5-phospho-beta-D-ribosyl)glycinamide-binding positions include Asp-286, Lys-356, and 363–364 (RR).

It belongs to the PurK/PurT family. As to quaternary structure, homodimer.

It carries out the reaction N(1)-(5-phospho-beta-D-ribosyl)glycinamide + formate + ATP = N(2)-formyl-N(1)-(5-phospho-beta-D-ribosyl)glycinamide + ADP + phosphate + H(+). Its pathway is purine metabolism; IMP biosynthesis via de novo pathway; N(2)-formyl-N(1)-(5-phospho-D-ribosyl)glycinamide from N(1)-(5-phospho-D-ribosyl)glycinamide (formate route): step 1/1. Involved in the de novo purine biosynthesis. Catalyzes the transfer of formate to 5-phospho-ribosyl-glycinamide (GAR), producing 5-phospho-ribosyl-N-formylglycinamide (FGAR). Formate is provided by PurU via hydrolysis of 10-formyl-tetrahydrofolate. This Pseudomonas putida (strain W619) protein is Formate-dependent phosphoribosylglycinamide formyltransferase.